The primary structure comprises 497 residues: Cytochrome P450 71A18 (497 aa).

The helical transmembrane segment at 4-24 threads the bilayer; sequence TLMVSLCLTTLLTLLLLKKFL. Heme is bound at residue Cys-439.

The protein belongs to the cytochrome P450 family. Heme is required as a cofactor.

It localises to the membrane. This is Cytochrome P450 71A18 (CYP71A18) from Arabidopsis thaliana (Mouse-ear cress).